A 156-amino-acid polypeptide reads, in one-letter code: Ribosomal RNA large subunit methyltransferase H (156 aa).

Residues Leu73, Gly104, and Leu123–Leu128 each bind S-adenosyl-L-methionine.

The protein belongs to the RNA methyltransferase RlmH family. Homodimer.

It is found in the cytoplasm. It catalyses the reaction pseudouridine(1915) in 23S rRNA + S-adenosyl-L-methionine = N(3)-methylpseudouridine(1915) in 23S rRNA + S-adenosyl-L-homocysteine + H(+). In terms of biological role, specifically methylates the pseudouridine at position 1915 (m3Psi1915) in 23S rRNA. This Thiobacillus denitrificans (strain ATCC 25259 / T1) protein is Ribosomal RNA large subunit methyltransferase H.